The primary structure comprises 66 residues: Large ribosomal subunit protein uL29 (66 aa).

Belongs to the universal ribosomal protein uL29 family.

In Thermococcus gammatolerans (strain DSM 15229 / JCM 11827 / EJ3), this protein is Large ribosomal subunit protein uL29.